The chain runs to 309 residues: Porphobilinogen deaminase (309 aa).

Residue Cys242 is modified to S-(dipyrrolylmethanemethyl)cysteine.

The protein belongs to the HMBS family. As to quaternary structure, monomer. Dipyrromethane is required as a cofactor.

The catalysed reaction is 4 porphobilinogen + H2O = hydroxymethylbilane + 4 NH4(+). It functions in the pathway porphyrin-containing compound metabolism; protoporphyrin-IX biosynthesis; coproporphyrinogen-III from 5-aminolevulinate: step 2/4. Functionally, tetrapolymerization of the monopyrrole PBG into the hydroxymethylbilane pre-uroporphyrinogen in several discrete steps. The protein is Porphobilinogen deaminase of Hamiltonella defensa subsp. Acyrthosiphon pisum (strain 5AT).